A 561-amino-acid chain; its full sequence is Urocanate hydratase (561 aa).

Residues 52–53 (GG), Gln130, 176–178 (GMG), Glu196, Arg201, 242–243 (NA), 263–267 (QTSAH), 273–274 (YL), and Tyr322 each bind NAD(+). Cys410 is an active-site residue. Gly492 contributes to the NAD(+) binding site.

This sequence belongs to the urocanase family. The cofactor is NAD(+).

It localises to the cytoplasm. The enzyme catalyses 4-imidazolone-5-propanoate = trans-urocanate + H2O. The protein operates within amino-acid degradation; L-histidine degradation into L-glutamate; N-formimidoyl-L-glutamate from L-histidine: step 2/3. In terms of biological role, catalyzes the conversion of urocanate to 4-imidazolone-5-propionate. This Salmonella arizonae (strain ATCC BAA-731 / CDC346-86 / RSK2980) protein is Urocanate hydratase.